The chain runs to 156 residues: Transcriptional repressor NrdR (156 aa).

A zinc finger lies at 3 to 34 (CPFCQHGHSRVIDSRVIEAGSAIRRRRECSQC). In terms of domain architecture, ATP-cone spans 46–136 (LLVLKRNGVT…VYKSFESADD (91 aa)).

The protein belongs to the NrdR family. Requires Zn(2+) as cofactor.

Its function is as follows. Negatively regulates transcription of bacterial ribonucleotide reductase nrd genes and operons by binding to NrdR-boxes. This Corynebacterium efficiens (strain DSM 44549 / YS-314 / AJ 12310 / JCM 11189 / NBRC 100395) protein is Transcriptional repressor NrdR.